The primary structure comprises 356 residues: 5-formaminoimidazole-4-carboxamide-1-(beta)-D-ribofuranosyl 5'-monophosphate synthetase (356 aa).

Residues H27 and S94 each contribute to the 5-amino-1-(5-phospho-beta-D-ribosyl)imidazole-4-carboxamide site. The ATP-grasp domain maps to 101-333 (TENFADMAVP…YADLMEENLS (233 aa)). ATP is bound by residues 145–196 (PHDI…TRYY) and E226. Residue N255 coordinates 5-amino-1-(5-phospho-beta-D-ribosyl)imidazole-4-carboxamide. Mg(2+) is bound by residues E293 and E306.

This sequence belongs to the phosphohexose mutase family. Mg(2+) serves as cofactor. It depends on Mn(2+) as a cofactor.

It carries out the reaction 5-amino-1-(5-phospho-beta-D-ribosyl)imidazole-4-carboxamide + formate + ATP = 5-formamido-1-(5-phospho-D-ribosyl)imidazole-4-carboxamide + ADP + phosphate. It functions in the pathway purine metabolism; IMP biosynthesis via de novo pathway; 5-formamido-1-(5-phospho-D-ribosyl)imidazole-4-carboxamide from 5-amino-1-(5-phospho-D-ribosyl)imidazole-4-carboxamide (formate route): step 1/1. Catalyzes the ATP- and formate-dependent formylation of 5-aminoimidazole-4-carboxamide-1-beta-d-ribofuranosyl 5'-monophosphate (AICAR) to 5-formaminoimidazole-4-carboxamide-1-beta-d-ribofuranosyl 5'-monophosphate (FAICAR) in the absence of folates. This chain is 5-formaminoimidazole-4-carboxamide-1-(beta)-D-ribofuranosyl 5'-monophosphate synthetase, found in Methanosarcina barkeri (strain Fusaro / DSM 804).